The chain runs to 65 residues: Small ribosomal subunit protein bS21 (65 aa).

Belongs to the bacterial ribosomal protein bS21 family.

The polypeptide is Small ribosomal subunit protein bS21 (Aster yellows phytoplasma).